Reading from the N-terminus, the 176-residue chain is Ribosome maturation factor RimM (176 aa).

One can recognise a PRC barrel domain in the interval 93–172 (EGEFFYFDVL…EILTKDAKSI (80 aa)).

It belongs to the RimM family. As to quaternary structure, binds ribosomal protein uS19.

It is found in the cytoplasm. Functionally, an accessory protein needed during the final step in the assembly of 30S ribosomal subunit, possibly for assembly of the head region. Essential for efficient processing of 16S rRNA. May be needed both before and after RbfA during the maturation of 16S rRNA. It has affinity for free ribosomal 30S subunits but not for 70S ribosomes. The protein is Ribosome maturation factor RimM of Campylobacter curvus (strain 525.92).